The sequence spans 109 residues: Glutaredoxin-8 (109 aa).

A Glutaredoxin domain is found at 5 to 109 (VTKAEEMIKS…EELTKIGLLP (105 aa)). C25 and C28 are oxidised to a cystine.

Belongs to the glutaredoxin family. As to quaternary structure, monomer.

The protein resides in the cytoplasm. Functionally, glutathione-dependent oxidoreductase with lower activity compared to the other members of the glutaredoxin family. The disulfide bond functions as an electron carrier in the glutathione-dependent synthesis of deoxyribonucleotides by the enzyme ribonucleotide reductase. The protein is Glutaredoxin-8 (GRX8) of Saccharomyces cerevisiae (strain ATCC 204508 / S288c) (Baker's yeast).